Here is a 233-residue protein sequence, read N- to C-terminus: Fibroblast growth factor 8 (233 aa).

Residues 1–22 (MGSPRSALSCLLLHLLVLCLQA) form the signal peptide. Asn155 is a glycosylation site (N-linked (GlcNAc...) asparagine).

Belongs to the heparin-binding growth factors family. As to quaternary structure, monomer. Homodimer. Interacts with FGFR1, FGFR2, FGFR3 and FGFR4. Affinity between fibroblast growth factors (FGFs) and their receptors is increased by heparan sulfate glycosaminoglycans that function as coreceptors.

The protein resides in the secreted. Plays an important role in the regulation of embryonic development, cell proliferation, cell differentiation and cell migration. Required for normal brain, eye, ear and limb development during embryogenesis. Required for normal development of the gonadotropin-releasing hormone (GnRH) neuronal system. Plays a role in neurite outgrowth in hippocampal cells. This is Fibroblast growth factor 8 (FGF8) from Homo sapiens (Human).